The chain runs to 72 residues: Translation initiation factor IF-1 (72 aa).

The S1-like domain occupies 1-72 (MSKEDMIEFS…TKGRITFRFK (72 aa)).

It belongs to the IF-1 family. In terms of assembly, component of the 30S ribosomal translation pre-initiation complex which assembles on the 30S ribosome in the order IF-2 and IF-3, IF-1 and N-formylmethionyl-tRNA(fMet); mRNA recruitment can occur at any time during PIC assembly.

It is found in the cytoplasm. Its function is as follows. One of the essential components for the initiation of protein synthesis. Stabilizes the binding of IF-2 and IF-3 on the 30S subunit to which N-formylmethionyl-tRNA(fMet) subsequently binds. Helps modulate mRNA selection, yielding the 30S pre-initiation complex (PIC). Upon addition of the 50S ribosomal subunit IF-1, IF-2 and IF-3 are released leaving the mature 70S translation initiation complex. This Acidiphilium cryptum (strain JF-5) protein is Translation initiation factor IF-1.